Reading from the N-terminus, the 305-residue chain is UDP-3-O-acyl-N-acetylglucosamine deacetylase (305 aa).

Residues histidine 79, histidine 238, and aspartate 242 each coordinate Zn(2+). The active-site Proton donor is histidine 265.

The protein belongs to the LpxC family. Requires Zn(2+) as cofactor.

The catalysed reaction is a UDP-3-O-[(3R)-3-hydroxyacyl]-N-acetyl-alpha-D-glucosamine + H2O = a UDP-3-O-[(3R)-3-hydroxyacyl]-alpha-D-glucosamine + acetate. The protein operates within glycolipid biosynthesis; lipid IV(A) biosynthesis; lipid IV(A) from (3R)-3-hydroxytetradecanoyl-[acyl-carrier-protein] and UDP-N-acetyl-alpha-D-glucosamine: step 2/6. Its function is as follows. Catalyzes the hydrolysis of UDP-3-O-myristoyl-N-acetylglucosamine to form UDP-3-O-myristoylglucosamine and acetate, the committed step in lipid A biosynthesis. This chain is UDP-3-O-acyl-N-acetylglucosamine deacetylase, found in Pasteurella multocida (strain Pm70).